The chain runs to 239 residues: Serine protease SplC (239 aa).

An N-terminal signal peptide occupies residues 1–36 (MNKNIVIKSMAALAILTSATGINAAVVEETQQIANA). Catalysis depends on charge relay system residues His-75, Asp-113, and Ser-193.

This sequence belongs to the peptidase S1B family.

The protein localises to the secreted. The protein is Serine protease SplC (splC) of Staphylococcus aureus (strain MSSA476).